The chain runs to 20 residues: 35 kDa cell wall protein (20 aa).

It is found in the secreted. The protein localises to the cell wall. The protein is 35 kDa cell wall protein of Phaseolus vulgaris (Kidney bean).